Consider the following 316-residue polypeptide: Glutathione synthetase (316 aa).

Residues 125–310 form the ATP-grasp domain; it reads KLFTAWFSDL…ITGMLMDAIE (186 aa). 151–207 provides a ligand contact to ATP; it reads WEKHSDIILKPLDGMGGASIFRVKEGDPNLGVIAETLTEHGTCYCMAQNYLPAIKDG. Mg(2+) contacts are provided by Glu-281 and Asn-283.

It belongs to the prokaryotic GSH synthase family. Mg(2+) is required as a cofactor. Mn(2+) serves as cofactor.

It carries out the reaction gamma-L-glutamyl-L-cysteine + glycine + ATP = glutathione + ADP + phosphate + H(+). Its pathway is sulfur metabolism; glutathione biosynthesis; glutathione from L-cysteine and L-glutamate: step 2/2. This chain is Glutathione synthetase, found in Shigella flexneri.